The sequence spans 750 residues: Photosystem I P700 chlorophyll a apoprotein A1 (750 aa).

A run of 8 helical transmembrane segments spans residues 70-93, 156-179, 195-219, 291-309, 346-369, 385-411, 433-455, and 531-549; these read VFSA…FHGA, LYCT…FHYH, LNHH…HVSL, IAHH…GHMY, WHAQ…HHMY, LSLF…IFMV, AIIS…LYIH, and FLVH…LILL. [4Fe-4S] cluster contacts are provided by cysteine 573 and cysteine 582. The next 2 helical transmembrane spans lie at 589-610 and 664-686; these read HVFL…HFSW and LSAY…MFLF. Histidine 675 lines the chlorophyll a' pocket. Positions 683 and 691 each coordinate chlorophyll a. Residue tryptophan 692 coordinates phylloquinone. The chain crosses the membrane as a helical span at residues 724-744; that stretch reads AVGVTHYLLGGIATTWAFFLA.

Belongs to the PsaA/PsaB family. As to quaternary structure, the PsaA/B heterodimer binds the P700 chlorophyll special pair and subsequent electron acceptors. PSI consists of a core antenna complex that captures photons, and an electron transfer chain that converts photonic excitation into a charge separation. The eukaryotic PSI reaction center is composed of at least 11 subunits. It depends on P700 is a chlorophyll a/chlorophyll a' dimer, A0 is one or more chlorophyll a, A1 is one or both phylloquinones and FX is a shared 4Fe-4S iron-sulfur center. as a cofactor.

The protein localises to the plastid. It is found in the chloroplast thylakoid membrane. It carries out the reaction reduced [plastocyanin] + hnu + oxidized [2Fe-2S]-[ferredoxin] = oxidized [plastocyanin] + reduced [2Fe-2S]-[ferredoxin]. In terms of biological role, psaA and PsaB bind P700, the primary electron donor of photosystem I (PSI), as well as the electron acceptors A0, A1 and FX. PSI is a plastocyanin-ferredoxin oxidoreductase, converting photonic excitation into a charge separation, which transfers an electron from the donor P700 chlorophyll pair to the spectroscopically characterized acceptors A0, A1, FX, FA and FB in turn. Oxidized P700 is reduced on the lumenal side of the thylakoid membrane by plastocyanin. In Nicotiana sylvestris (Wood tobacco), this protein is Photosystem I P700 chlorophyll a apoprotein A1.